The sequence spans 461 residues: 23S rRNA (uracil(1939)-C(5))-methyltransferase RlmD (461 aa).

The tract at residues 1–26 is disordered; the sequence is MAKHERGLRFQPTGGSKAPQIPTGKK. The TRAM domain occupies 20–78; the sequence is QIPTGKKQRLSIERLANDGRGIAFFEGKTWFVLGALAGEEVEARVLGAHGKVVEARTER. Cys-91, Cys-97, Cys-100, and Cys-179 together coordinate [4Fe-4S] cluster. S-adenosyl-L-methionine contacts are provided by Gln-283, Phe-312, Asn-317, Glu-333, Asp-360, and Asp-381. Catalysis depends on Cys-407, which acts as the Nucleophile.

Belongs to the class I-like SAM-binding methyltransferase superfamily. RNA M5U methyltransferase family. RlmD subfamily.

It carries out the reaction uridine(1939) in 23S rRNA + S-adenosyl-L-methionine = 5-methyluridine(1939) in 23S rRNA + S-adenosyl-L-homocysteine + H(+). Functionally, catalyzes the formation of 5-methyl-uridine at position 1939 (m5U1939) in 23S rRNA. This chain is 23S rRNA (uracil(1939)-C(5))-methyltransferase RlmD, found in Pseudomonas fluorescens (strain Pf0-1).